The chain runs to 270 residues: Phospholysine phosphohistidine inorganic pyrophosphate phosphatase (270 aa).

Residues Asp17 and Ser19 each contribute to the Mg(2+) site. Substrate is bound by residues 17–19, 54–55, and Lys189; these read DIS and TN. Asp214 is a binding site for Mg(2+).

The protein belongs to the HAD-like hydrolase superfamily. As to quaternary structure, homodimer. The cofactor is Mg(2+).

The protein localises to the cytoplasm. The protein resides in the nucleus. It catalyses the reaction diphosphate + H2O = 2 phosphate + H(+). Phosphatase that hydrolyzes imidodiphosphate, 3-phosphohistidine and 6-phospholysine. Has broad substrate specificity and can also hydrolyze inorganic diphosphate, but with lower efficiency. This is Phospholysine phosphohistidine inorganic pyrophosphate phosphatase (Lhpp) from Mus musculus (Mouse).